A 547-amino-acid polypeptide reads, in one-letter code: Mitogen-activated protein kinase 15 (547 aa).

Positions 1–20 (MCAAEVDRHVSQRYLIKRRL) are ubiquitin-conjugating. Positions 14 to 305 (YLIKRRLGKG…AEQALQHPYV (292 aa)) constitute a Protein kinase domain. Residues 20 to 28 (LGKGAYGIV) and Lys-43 each bind ATP. Catalysis depends on Asp-138, which acts as the Proton acceptor. Thr-176 bears the Phosphothreonine mark. The short motif at 176 to 178 (TEY) is the TXY element. Tyr-178 bears the Phosphotyrosine mark. The necessary to interact with ESRRA, to regulate its subcellular localization and to inhibit its transcriptional activity stretch occupies residues 266 to 286 (LDALLPPDTPPEALDLLKRLL). Residues 301–380 (QHPYVQRFHC…SQRQSLKPGV (80 aa)) are requires for interaction with GABARAP, MAP1LC3B AND GABARAPL1. The segment at 370–503 (ASQRQSLKPG…EAPEPRPGRR (134 aa)) is disordered. 2 PXXXP motif repeats span residues 378–382 (PGVLP) and 385–389 (LAETP). 2 PXXXP motif; regulates binding with chromatin and interaction with PCNA repeats span residues 393–397 (RGPKP) and 401–405 (HGHDP). Over residues 401–414 (HGHDPEHVEVRRQS) the composition is skewed to basic and acidic residues. Residue Arg-449 is modified to Omega-N-methylarginine. Over residues 454-465 (SLTSQAAAQAAN) the composition is skewed to polar residues. Over residues 481 to 490 (AVGARRVPSR) the composition is skewed to low complexity. Over residues 491–500 (LPREAPEPRP) the composition is skewed to basic and acidic residues.

The protein belongs to the protein kinase superfamily. CMGC Ser/Thr protein kinase family. MAP kinase subfamily. In terms of assembly, interacts with CSK/c-Src, ABL1, RET and TGFB1I1. Interacts with GABARAP, MAP1LC3B and GABARAPL1; controls, in a kinase-dependent fashion, both basal and starvation-induced autophagy. Interacts with ESRRA; promotes re-localization of ESRRA to the cytoplasm through a XPO1-dependent mechanism then inhibits ESRRA transcriptional activity. Interacts with PCNA; the interaction is chromatin binding- and kinase activity-dependent and prevents MDM2-mediated PCNA destruction by inhibiting the association of PCNA with MDM2. Interacts with DVL2. Interacts with CLIC3; MAPK15 does not phosphorylates CLIC3. Post-translationally, autophosphorylated on Thr-176 and Tyr-178; activates the enzyme. In terms of processing, dephosphorylated by PTPN1. Ubiquitinated. Ubiquitination may allow its tight kinase activity regulation and rapid turnover. May be ubiquitinated by a SCF E3 ligase. As to expression, ubiquitously expressed at a weak level. Highest expression is found in testis and to a lower extent in lung.

It is found in the cytoplasm. The protein resides in the cytoskeleton. It localises to the cilium basal body. Its subcellular location is the cell junction. The protein localises to the tight junction. It is found in the microtubule organizing center. The protein resides in the centrosome. It localises to the centriole. Its subcellular location is the cytoplasmic vesicle. The protein localises to the autophagosome. It is found in the golgi apparatus. The protein resides in the nucleus. It localises to the spindle. The catalysed reaction is L-seryl-[protein] + ATP = O-phospho-L-seryl-[protein] + ADP + H(+). It catalyses the reaction L-threonyl-[protein] + ATP = O-phospho-L-threonyl-[protein] + ADP + H(+). With respect to regulation, activated by threonine and tyrosine phosphorylation. Inhibited by dual specificity phosphatases, such as DUSP1. Phosphorylation and activation in response to DNA damaging agents, serum stimulation. Constitutively activated when phosphorylated on Tyr-178. Activity depends on the relative rates of MAPK15 autophosphorylation and dephosphorylation by PTPN1. Atypical MAPK protein that regulates several process such as autophagy, ciliogenesis, protein trafficking/secretion and genome integrity, in a kinase activity-dependent manner. Controls both, basal and starvation-induced autophagy throught its interaction with GABARAP, MAP1LC3B and GABARAPL1 leading to autophagosome formation, SQSTM1 degradation and reduced MAP1LC3B inhibitory phosphorylation. Regulates primary cilium formation and the localization of ciliary proteins involved in cilium structure, transport, and signaling. Prevents the relocation of the sugar-adding enzymes from the Golgi to the endoplasmic reticulum, thereby restricting the production of sugar-coated proteins. Upon amino-acid starvation, mediates transitional endoplasmic reticulum site disassembly and inhibition of secretion. Binds to chromatin leading to MAPK15 activation and interaction with PCNA, that which protects genomic integrity by inhibiting MDM2-mediated degradation of PCNA. Regulates DA transporter (DAT) activity and protein expression via activation of RhoA. In response to H(2)O(2) treatment phosphorylates ELAVL1, thus preventing it from binding to the PDCD4 3'UTR and rendering the PDCD4 mRNA accessible to miR-21 and leading to its degradation and loss of protein expression. Also functions in a kinase activity-independent manner as a negative regulator of growth. Phosphorylates in vitro FOS and MBP. During oocyte maturation, plays a key role in the microtubule organization and mei- otic cell cycle progression in oocytes, fertilized eggs, and early embryos. Interacts with ESRRA promoting its re-localization from the nucleus to the cytoplasm and then prevents its transcriptional activity. The chain is Mitogen-activated protein kinase 15 (Mapk15) from Rattus norvegicus (Rat).